Consider the following 753-residue polypeptide: 5-methyltetrahydropteroyltriglutamate--homocysteine methyltransferase (753 aa).

Residues 17 to 20 (RELK) and K117 each bind 5-methyltetrahydropteroyltri-L-glutamate. Residues 431 to 433 (IGS) and E484 each bind L-homocysteine. Residues 431–433 (IGS) and E484 contribute to the L-methionine site. Residues 515–516 (RC) and W561 each bind 5-methyltetrahydropteroyltri-L-glutamate. L-homocysteine is bound at residue D599. D599 contributes to the L-methionine binding site. Residue E605 participates in 5-methyltetrahydropteroyltri-L-glutamate binding. 3 residues coordinate Zn(2+): H641, C643, and E665. Residue H694 is the Proton donor of the active site. C726 serves as a coordination point for Zn(2+).

It belongs to the vitamin-B12 independent methionine synthase family. It depends on Zn(2+) as a cofactor.

It carries out the reaction 5-methyltetrahydropteroyltri-L-glutamate + L-homocysteine = tetrahydropteroyltri-L-glutamate + L-methionine. Its pathway is amino-acid biosynthesis; L-methionine biosynthesis via de novo pathway; L-methionine from L-homocysteine (MetE route): step 1/1. Catalyzes the transfer of a methyl group from 5-methyltetrahydrofolate to homocysteine resulting in methionine formation. In Shigella boydii serotype 4 (strain Sb227), this protein is 5-methyltetrahydropteroyltriglutamate--homocysteine methyltransferase.